A 1268-amino-acid chain; its full sequence is Meiosis inhibitor protein 1 (1268 aa).

As to expression, strongly expressed in testis, weakly in brain, and not detected in spleen, liver, kidney, small intestine or colon.

Its function is as follows. Required for normal meiotic chromosome synapsis. May be involved in the formation of meiotic double-strand breaks (DSBs) in spermatocytes. In Mus musculus (Mouse), this protein is Meiosis inhibitor protein 1.